A 182-amino-acid chain; its full sequence is Constitutive photomorphogenesis protein 10 (182 aa).

Positions 36-182 (ASGKRIQREM…AKEWTLRFAK (147 aa)) constitute a UBC core domain.

Belongs to the ubiquitin-conjugating enzyme family. In terms of assembly, component of the CDD complex, at least composed of COP10, DET1 and DDB1A. Interacts with E3 ubiquitin ligase COP1. Interacts with E2 ubiquitin conjugating UBC5. Interacts with CSN3, CSN4 and CSN8 subunits of the COP9 complex. Expressed in flower, leaf, stem and seedling. Expressed at lower level in root.

It localises to the nucleus. Functionally, component of light signal transduction machinery. Involved in repression of photomorphogenesis in darkness by participating in the CDD complex, a complex probably required to regulate the activity of ubiquitin conjugating enzymes (E2s). Repression of photomorphogenesis is probably mediated by ubiquitination and subsequent degradation of photomorphogenesis-promoting factors such as HY5, HYH and LAF1. Although strongly related to ubiquitin-conjugating enzyme, it has no catalytic activity by itself due to the absence of the conserved Cys active site at position 120. It can however enhance the activity of E2 conjugating enzymes. This Arabidopsis thaliana (Mouse-ear cress) protein is Constitutive photomorphogenesis protein 10 (COP10).